A 67-amino-acid polypeptide reads, in one-letter code: Large ribosomal subunit protein uL29 (67 aa).

Belongs to the universal ribosomal protein uL29 family.

The chain is Large ribosomal subunit protein uL29 from Solibacter usitatus (strain Ellin6076).